The following is a 206-amino-acid chain: Small ribosomal subunit protein uS4 (206 aa).

The S4 RNA-binding domain maps to 96 to 159 (TRLDNVVYRM…KKQARISASL (64 aa)).

Belongs to the universal ribosomal protein uS4 family. Part of the 30S ribosomal subunit. Contacts protein S5. The interaction surface between S4 and S5 is involved in control of translational fidelity.

Functionally, one of the primary rRNA binding proteins, it binds directly to 16S rRNA where it nucleates assembly of the body of the 30S subunit. In terms of biological role, with S5 and S12 plays an important role in translational accuracy. In Shewanella violacea, this protein is Small ribosomal subunit protein uS4.